The chain runs to 346 residues: MLKVAINGFGRIGRNVLRAVYESGKHQQIKVVAVNELAQPEAMAHLLQYDTSHGRFGKRISHDQEHLYVHHDACPQGKGEFDSIRILHLSEINLLPWRDLEVDLVLDCTGVFGCQADGLEHIKAGAKKVLFSHPGASDLDNTIIYGVNHETLKAEHNVVSNGSCTTNCIVPIIKVLDEAFGIESGTITTIHSSMNDQQVIDAYHSDLRRTRAASQSIIPVDTKLHKGIERIFPKFSNKFEAISVRVPTVNVTAMDLSVTINTNVKVNDVNQTIVNASQCTLRGIVDYTEAPLVSIDFNHDPHSAIVDGSQTRVSNGHLVKMLVWCDNEWGFANRMLDTALAMQAAK.

Residue 11–12 (RI) participates in NAD(+) binding. Substrate contacts are provided by residues 163–165 (SCT), R209, 222–223 (TK), and R245. Catalysis depends on C164, which acts as the Nucleophile. N327 is an NAD(+) binding site.

This sequence belongs to the glyceraldehyde-3-phosphate dehydrogenase family. Epd subfamily. In terms of assembly, homotetramer.

It localises to the cytoplasm. It carries out the reaction D-erythrose 4-phosphate + NAD(+) + H2O = 4-phospho-D-erythronate + NADH + 2 H(+). The protein operates within cofactor biosynthesis; pyridoxine 5'-phosphate biosynthesis; pyridoxine 5'-phosphate from D-erythrose 4-phosphate: step 1/5. Catalyzes the NAD-dependent conversion of D-erythrose 4-phosphate to 4-phosphoerythronate. The chain is D-erythrose-4-phosphate dehydrogenase from Vibrio vulnificus (strain YJ016).